The chain runs to 67 residues: UPF0519 protein C (67 aa).

The disordered stretch occupies residues 18–37 (KSQANLNSNSTNSPNNVQGL). Low complexity predominate over residues 22–33 (NLNSNSTNSPNN).

This sequence belongs to the UPF0519 family.

This is UPF0519 protein C from Dictyostelium discoideum (Social amoeba).